We begin with the raw amino-acid sequence, 143 residues long: FAD synthase (143 aa).

ATP-binding positions include 13–14 (TF), 18–21 (HPGH), and Asp96.

Belongs to the archaeal FAD synthase family. Homodimer. The cofactor is a divalent metal cation.

The enzyme catalyses FMN + ATP + H(+) = FAD + diphosphate. It functions in the pathway cofactor biosynthesis; FAD biosynthesis; FAD from FMN: step 1/1. In terms of biological role, catalyzes the transfer of the AMP portion of ATP to flavin mononucleotide (FMN) to produce flavin adenine dinucleotide (FAD) coenzyme. In Methanothrix thermoacetophila (strain DSM 6194 / JCM 14653 / NBRC 101360 / PT) (Methanosaeta thermophila), this protein is FAD synthase.